The sequence spans 326 residues: Transmembrane protein 255B (326 aa).

The next 4 membrane-spanning stretches (helical) occupy residues 26 to 46, 55 to 75, 85 to 105, and 200 to 220; these read LWFV…GLAA, VGGY…IIGI, LVAA…CAIV, and AVLN…LGAF. Positions 284-326 are disordered; sequence LASSEDLQPPSPSSSGSGLPGQAPPCYAPTYFPPGEKPPPYAP. A compositionally biased stretch (pro residues) spans 305-326; sequence QAPPCYAPTYFPPGEKPPPYAP.

The protein belongs to the TMEM255 family.

The protein localises to the membrane. The protein is Transmembrane protein 255B (TMEM255B) of Homo sapiens (Human).